A 281-amino-acid polypeptide reads, in one-letter code: Probable endonuclease 4 (281 aa).

Residues histidine 68, histidine 108, glutamate 145, aspartate 179, histidine 182, histidine 216, aspartate 229, histidine 231, and glutamate 261 each contribute to the Zn(2+) site.

It belongs to the AP endonuclease 2 family. Zn(2+) is required as a cofactor.

The catalysed reaction is Endonucleolytic cleavage to 5'-phosphooligonucleotide end-products.. Functionally, endonuclease IV plays a role in DNA repair. It cleaves phosphodiester bonds at apurinic or apyrimidinic (AP) sites, generating a 3'-hydroxyl group and a 5'-terminal sugar phosphate. The sequence is that of Probable endonuclease 4 from Trichlorobacter lovleyi (strain ATCC BAA-1151 / DSM 17278 / SZ) (Geobacter lovleyi).